Reading from the N-terminus, the 713-residue chain is MADPTSSERLLVTAALPYANGPIHIGHLAGAYLPADLFVRYQRLKGEDVAFICGSDEMGVAILMRAIREDRTPEDIIDTYHPQIRDNFERFGMSFDYYGRTSSETHTETTQDFFRVLDENGGFDLKTDEQLYDPEAEMFLADRFVIGTCPVCGFEEAYGDQCEQCGSSLSPTELENPQSTLTDATPEFKETTHWYLPLGELQPQLEEWIGSHPEWKNNVVGQIQSWFDEGLKGRAITRDVLWGVPVPDDVAERHGLEAEGKVIYVWFDAPIGYISATKEWAAEQGEPDAWTDYWQDEDTRLVHFIGKDNIVFHCLMFPSMLMEHGDYVLPDNVPANEFLNLEGEKLSTSRGWAVWLHEYLDDFADERHAPDLLRYALATTLPETKDADFSWEGFQQRVNGELANVFGNFVHRTLTFAQRYFDGTVPPLEDPSEADRVMLDRMAEVPDTVGAAYEEHRTRDAVFETMALARRGNKYFNDTEPWHTHESDPQACANTIHVSLQVCAALSILFEPVLPSAAATLRERIGLENVRTSTPDDDPAGAVGWEDAGAPLLPAGHPIPSGPDPEPLFQKIDDDTIEAQIEKLRDRAAERDTDPSSTTDMDYEALSDNISFDDFTQLDLRAGTVTTAEPVPDADKLLRLEVDLGFEERQILAGVAEQMAPDDVVGLEVVVVANMAPKEMFGFESQGMVLMAEEPDGTFVPVTTEAEDGSVVR.

A 'HIGH' region motif is present at residues 17–27 (PYANGPIHIGH). Residues Cys-149, Cys-152, Cys-162, and Cys-165 each coordinate Zn(2+). The 'KMSKS' region signature appears at 345-349 (KLSTS). ATP is bound at residue Thr-348. The disordered stretch occupies residues 530 to 564 (VRTSTPDDDPAGAVGWEDAGAPLLPAGHPIPSGPD). One can recognise a tRNA-binding domain in the interval 614 to 713 (DFTQLDLRAG…TEAEDGSVVR (100 aa)).

It belongs to the class-I aminoacyl-tRNA synthetase family. MetG type 1 subfamily. As to quaternary structure, homodimer. Requires Zn(2+) as cofactor.

The protein localises to the cytoplasm. It catalyses the reaction tRNA(Met) + L-methionine + ATP = L-methionyl-tRNA(Met) + AMP + diphosphate. Its function is as follows. Is required not only for elongation of protein synthesis but also for the initiation of all mRNA translation through initiator tRNA(fMet) aminoacylation. The sequence is that of Methionine--tRNA ligase from Salinibacter ruber (strain DSM 13855 / M31).